A 640-amino-acid chain; its full sequence is Chaperone protein DnaK (640 aa).

At Thr199 the chain carries Phosphothreonine; by autocatalysis. Residues 603 to 640 (YAAGETESSAAEPGEPQEKTVDAEVVDAEFEEVKDDKK) are disordered. Over residues 626 to 640 (EVVDAEFEEVKDDKK) the composition is skewed to acidic residues.

This sequence belongs to the heat shock protein 70 family.

Acts as a chaperone. This Methylobacillus flagellatus (strain ATCC 51484 / DSM 6875 / VKM B-1610 / KT) protein is Chaperone protein DnaK.